We begin with the raw amino-acid sequence, 337 residues long: Alcohol dehydrogenase 1 (337 aa).

The Zn(2+) site is built by cysteine 37, histidine 58, cysteine 89, cysteine 92, cysteine 95, cysteine 103, and cysteine 145.

The protein belongs to the zinc-containing alcohol dehydrogenase family. As to quaternary structure, multimeric (with different ratios of monomers). The cofactor is Zn(2+).

It catalyses the reaction a primary alcohol + NAD(+) = an aldehyde + NADH + H(+). The enzyme catalyses a secondary alcohol + NAD(+) = a ketone + NADH + H(+). It functions in the pathway alcohol metabolism; ethanol biosynthesis via fermentation pathway. Inhibited by ethanol. The protein is Alcohol dehydrogenase 1 (adhA) of Zymomonas mobilis subsp. mobilis (strain ATCC 31821 / ZM4 / CP4).